The chain runs to 449 residues: MGRMFGTDGVRGVANKELTADLAYKLGKAGAFILTEGTHRPKILVGMDTRISGDMLESALVAGILSVGAEAICVGVIPTPAIAYLTRKYNADAGVVISASHNPVEYNGIKFFNKNGYKLSDELEDSIQALIRDDFKDVPVLTGENIGRKIEEDGEAIRDYIDFAKSTIKGDLKGLKVALDCANGASYITSVEAFKELEAEVHVINNKPDGININRNSGSTHPEDLMEYVVKNNCHMGLAFDGDADRCLAIDEKGNLINGDFILAICGKELKKQGRLKKNTIVVTVMSNLGLDIAMKKEEINTIKTKVGDRYVLEEMLKNDYAIGGEQSGHIIFSDYNTTGDGLVTALQLAHIVKESGKTFSELCSIMKELPQVLVNAKVPNDQKDIYLKDEEIKSEIDTITKNLDGSGRVLIRPSGTEPLVRVMLEGENQKEIDKLAHGLAKLIENKVK.

Residue serine 100 is the Phosphoserine intermediate of the active site. Mg(2+) is bound by residues serine 100, aspartate 241, aspartate 243, and aspartate 245. Serine 100 carries the post-translational modification Phosphoserine.

This sequence belongs to the phosphohexose mutase family. Requires Mg(2+) as cofactor. In terms of processing, activated by phosphorylation.

It carries out the reaction alpha-D-glucosamine 1-phosphate = D-glucosamine 6-phosphate. Functionally, catalyzes the conversion of glucosamine-6-phosphate to glucosamine-1-phosphate. The polypeptide is Phosphoglucosamine mutase (Clostridium botulinum (strain Langeland / NCTC 10281 / Type F)).